The primary structure comprises 374 residues: Phosphomevalonate kinase (374 aa).

The protein belongs to the GHMP kinase family. Homodimer. Mg(2+) serves as cofactor.

The catalysed reaction is (R)-5-phosphomevalonate + ATP = (R)-5-diphosphomevalonate + ADP. It functions in the pathway isoprenoid biosynthesis; isopentenyl diphosphate biosynthesis via mevalonate pathway; isopentenyl diphosphate from (R)-mevalonate: step 2/3. In terms of biological role, catalyzes the phosphorylation of (R)-mevalonate 5-phosphate (MVAP) to (R)-mevalonate 5-diphosphate (MVAPP). Functions in the mevalonate (MVA) pathway leading to isopentenyl diphosphate (IPP), a key precursor for the biosynthesis of isoprenoid compounds. This is Phosphomevalonate kinase from Streptomyces sp. (strain CL190).